A 294-amino-acid chain; its full sequence is Methionine aminopeptidase (294 aa).

Histidine 65 serves as a coordination point for substrate. Aspartate 85, aspartate 96, and histidine 156 together coordinate a divalent metal cation. Histidine 164 contributes to the substrate binding site. A divalent metal cation contacts are provided by glutamate 189 and glutamate 279.

This sequence belongs to the peptidase M24A family. Methionine aminopeptidase archaeal type 2 subfamily. In terms of assembly, monomer. Co(2+) is required as a cofactor. Zn(2+) serves as cofactor. The cofactor is Mn(2+). Requires Fe(2+) as cofactor.

The enzyme catalyses Release of N-terminal amino acids, preferentially methionine, from peptides and arylamides.. Functionally, removes the N-terminal methionine from nascent proteins. The N-terminal methionine is often cleaved when the second residue in the primary sequence is small and uncharged (Met-Ala-, Cys, Gly, Pro, Ser, Thr, or Val). This Methanocaldococcus jannaschii (strain ATCC 43067 / DSM 2661 / JAL-1 / JCM 10045 / NBRC 100440) (Methanococcus jannaschii) protein is Methionine aminopeptidase.